Consider the following 203-residue polypeptide: Urease accessory protein UreG (203 aa).

13–20 (GPVGSGKT) provides a ligand contact to GTP.

This sequence belongs to the SIMIBI class G3E GTPase family. UreG subfamily. As to quaternary structure, homodimer. UreD, UreF and UreG form a complex that acts as a GTP-hydrolysis-dependent molecular chaperone, activating the urease apoprotein by helping to assemble the nickel containing metallocenter of UreC. The UreE protein probably delivers the nickel.

The protein resides in the cytoplasm. Facilitates the functional incorporation of the urease nickel metallocenter. This process requires GTP hydrolysis, probably effectuated by UreG. This is Urease accessory protein UreG from Methylobacillus flagellatus (strain ATCC 51484 / DSM 6875 / VKM B-1610 / KT).